A 1110-amino-acid chain; its full sequence is Nonribisomal peptide synthetase benY (1110 aa).

The segment at 47–443 is adenylation; sequence RALEFPEKIA…GRKDHQLKVR (397 aa). Residues 575 to 651 form the Carrier domain; that stretch reads TLETESEKIL…EMAQSARVVP (77 aa). Serine 612 carries the O-(pantetheine 4'-phosphoryl)serine modification. Residues 713-1025 are condensation; it reads YILDGDVDFD…IFHHQNIDTK (313 aa).

It belongs to the NRP synthetase family.

The protein operates within secondary metabolite biosynthesis. Nonribisomal peptide synthetase; part of the gene cluster that mediates the biosynthesis of benzomalvin A and D. The pathway begins with the loading of amino acid precursors onto the A domains of the non ribosomal peptide synthetases benY and benZ. BenY and the A1 domain of benZ are loaded with anthranilate (Anth), while the A2 domain of benZ is loaded with phenylalanine (Phe). N-methylation of Phe by the methyltransferase benX may happen before loading of Phe onto benZ, after loading of Phe, or after dipeptide formation. Condensation of Anth with the secondary amine of NmPhe or Phe is catalyzed by the C1 domain of benZ, forming a dipeptide intermediate. This is followed by in trans condensation of the Anth-NmPhe dipeptide with Anth bound to the T domain of benY by the C2 domain of benZ to form the linear tripeptide Anth-NmPhe-Anth. Cyclization and release of the tripeptide is then catalyzed by the C-terminal C domain of benY and the resulting 11-member macrocyclic intermediate is expected to spontaneously collapse to form the benzodiazepine core. Benzomalvin A is in conformational equilibrium with its atropisomer, benzomalvin D. This chain is Nonribisomal peptide synthetase benY, found in Aspergillus terreus.